The chain runs to 144 residues: Protein BUD31 homolog (144 aa).

A Nuclear localization signal motif is present at residues 2-10 (PKVRRSRKP).

This sequence belongs to the BUD31 (G10) family.

The protein resides in the nucleus. The polypeptide is Protein BUD31 homolog (Branchiostoma belcheri (Amphioxus)).